The following is a 206-amino-acid chain: MLGLIGKKVGMTQIFQKNGIVVPVTVIEFQPNYIIGKKTVDRDGYSALIAGSVDLKSSKVSKPIKGQYKSLKDIEPKRYVIELKGLDGYDAGDEIKVDVFKSVKYVDVTGTTKGKGFQGAMKRHNFSGGPSSHGSKFHRHLGGTGQATTPARTFKGTKMAGRMAGNQQTIQNLEVVLIDEEKRALLVKGAVPGAKGSFVVVKKSKK.

The interval 127 to 151 (SGGPSSHGSKFHRHLGGTGQATTPA) is disordered.

Belongs to the universal ribosomal protein uL3 family. In terms of assembly, part of the 50S ribosomal subunit. Forms a cluster with proteins L14 and L19.

In terms of biological role, one of the primary rRNA binding proteins, it binds directly near the 3'-end of the 23S rRNA, where it nucleates assembly of the 50S subunit. This is Large ribosomal subunit protein uL3 from Borreliella burgdorferi (strain ATCC 35210 / DSM 4680 / CIP 102532 / B31) (Borrelia burgdorferi).